The chain runs to 334 residues: Ferredoxin--NADP reductase (334 aa).

Asp33, Gln41, Tyr46, Ala86, Phe120, Asp286, and Thr327 together coordinate FAD.

This sequence belongs to the ferredoxin--NADP reductase type 2 family. In terms of assembly, homodimer. The cofactor is FAD.

It carries out the reaction 2 reduced [2Fe-2S]-[ferredoxin] + NADP(+) + H(+) = 2 oxidized [2Fe-2S]-[ferredoxin] + NADPH. This Rickettsia typhi (strain ATCC VR-144 / Wilmington) protein is Ferredoxin--NADP reductase.